A 719-amino-acid polypeptide reads, in one-letter code: Fatty acid oxidation complex subunit alpha (719 aa).

The tract at residues 1 to 190 is enoyl-CoA hydratase/isomerase; it reads MVYQGNRITV…KLGLVDATVA (190 aa). A substrate-binding site is contributed by Asp-298. Residues 313 to 719 are 3-hydroxyacyl-CoA dehydrogenase; the sequence is HDINEAAVLG…AAGETFYATA (407 aa). NAD(+) is bound by residues Met-326, Asp-345, 402 to 404, Lys-409, and Ser-431; that span reads VVE. His-452 serves as the catalytic For 3-hydroxyacyl-CoA dehydrogenase activity. Asn-455 contacts NAD(+). Asn-502 lines the substrate pocket.

It in the N-terminal section; belongs to the enoyl-CoA hydratase/isomerase family. The protein in the C-terminal section; belongs to the 3-hydroxyacyl-CoA dehydrogenase family. Heterotetramer of two alpha chains (FadB) and two beta chains (FadA).

It catalyses the reaction a (3S)-3-hydroxyacyl-CoA + NAD(+) = a 3-oxoacyl-CoA + NADH + H(+). It carries out the reaction a (3S)-3-hydroxyacyl-CoA = a (2E)-enoyl-CoA + H2O. The enzyme catalyses a 4-saturated-(3S)-3-hydroxyacyl-CoA = a (3E)-enoyl-CoA + H2O. The catalysed reaction is (3S)-3-hydroxybutanoyl-CoA = (3R)-3-hydroxybutanoyl-CoA. It catalyses the reaction a (3Z)-enoyl-CoA = a 4-saturated (2E)-enoyl-CoA. It carries out the reaction a (3E)-enoyl-CoA = a 4-saturated (2E)-enoyl-CoA. It functions in the pathway lipid metabolism; fatty acid beta-oxidation. Functionally, involved in the aerobic and anaerobic degradation of long-chain fatty acids via beta-oxidation cycle. Catalyzes the formation of 3-oxoacyl-CoA from enoyl-CoA via L-3-hydroxyacyl-CoA. It can also use D-3-hydroxyacyl-CoA and cis-3-enoyl-CoA as substrate. This Psychrobacter cryohalolentis (strain ATCC BAA-1226 / DSM 17306 / VKM B-2378 / K5) protein is Fatty acid oxidation complex subunit alpha.